A 277-amino-acid chain; its full sequence is Digeranylgeranylglyceryl phosphate synthase (277 aa).

8 consecutive transmembrane segments (helical) span residues 16 to 36 (LLAGIVGVLGSIVAAGGLPEL), 40 to 60 (ILVFLVVFLGCAGGNTINDYF), 83 to 105 (AALWYSVALFATGIVLAWFINIW), 107 to 124 (FLLAIVAYVTMFIYAWKL), 146 to 166 (GAIAVGEIGLAGTLALCAFLV), 202 to 222 (VGALFAILTVVASFLPIKAGI), 224 to 244 (LGYLAMLPVDAVILYSAFLIL), and 256 to 276 (QILLKVSVFLAVVAFLIASLV).

Belongs to the UbiA prenyltransferase family. DGGGP synthase subfamily. Mg(2+) serves as cofactor.

The protein resides in the cell membrane. It carries out the reaction sn-3-O-(geranylgeranyl)glycerol 1-phosphate + (2E,6E,10E)-geranylgeranyl diphosphate = 2,3-bis-O-(geranylgeranyl)-sn-glycerol 1-phosphate + diphosphate. It functions in the pathway membrane lipid metabolism; glycerophospholipid metabolism. Functionally, prenyltransferase that catalyzes the transfer of the geranylgeranyl moiety of geranylgeranyl diphosphate (GGPP) to the C2 hydroxyl of (S)-3-O-geranylgeranylglyceryl phosphate (GGGP). This reaction is the second ether-bond-formation step in the biosynthesis of archaeal membrane lipids. This Thermococcus kodakarensis (strain ATCC BAA-918 / JCM 12380 / KOD1) (Pyrococcus kodakaraensis (strain KOD1)) protein is Digeranylgeranylglyceryl phosphate synthase.